The sequence spans 659 residues: Biosynthetic arginine decarboxylase 2 (659 aa).

N6-(pyridoxal phosphate)lysine is present on Lys-119. Residue 311–321 (LNVGGGLAVDY) participates in substrate binding.

Belongs to the Orn/Lys/Arg decarboxylase class-II family. SpeA subfamily. It depends on Mg(2+) as a cofactor. Requires pyridoxal 5'-phosphate as cofactor.

It catalyses the reaction L-arginine + H(+) = agmatine + CO2. Its function is as follows. Catalyzes the biosynthesis of agmatine from arginine. This is Biosynthetic arginine decarboxylase 2 (speA2) from Synechocystis sp. (strain ATCC 27184 / PCC 6803 / Kazusa).